The sequence spans 91 residues: UPF0223 protein SACOL1106 (91 aa).

This sequence belongs to the UPF0223 family.

In Staphylococcus aureus (strain COL), this protein is UPF0223 protein SACOL1106.